A 106-amino-acid chain; its full sequence is Large ribosomal subunit protein uL24 (106 aa).

Belongs to the universal ribosomal protein uL24 family. Part of the 50S ribosomal subunit.

In terms of biological role, one of two assembly initiator proteins, it binds directly to the 5'-end of the 23S rRNA, where it nucleates assembly of the 50S subunit. One of the proteins that surrounds the polypeptide exit tunnel on the outside of the subunit. This chain is Large ribosomal subunit protein uL24, found in Bordetella petrii (strain ATCC BAA-461 / DSM 12804 / CCUG 43448).